The following is a 196-amino-acid chain: MTKKNKNQTLALDLDNCEKLTQLKEIPKSRSSSITSIESEGSIQSVLKPPPMREFEDVVAFESYIRDETWDNDFDYCHAHLSYYPPFITKEVHGNMDKIKPTMNKKSRKFKRNLQHHIQKHLMPEMEKCSGFTMDFGKAGVEETPTMLKWKFEDTSDHGFSKEEENQFDRHWKLQLEVTCNNENPLVEVDYMAIPI.

Positions 28 to 48 are disordered; sequence KSRSSSITSIESEGSIQSVLK. Over residues 29–45 the composition is skewed to low complexity; sequence SRSSSITSIESEGSIQS.

It belongs to the RGI1 family.

The protein resides in the cell membrane. Functionally, involved in the control of energetic metabolism and significantly contribute to cell fitness, especially under respiratory growth conditions. This Debaryomyces hansenii (strain ATCC 36239 / CBS 767 / BCRC 21394 / JCM 1990 / NBRC 0083 / IGC 2968) (Yeast) protein is Respiratory growth induced protein 1 (RGI1).